Here is a 241-residue protein sequence, read N- to C-terminus: MSDLPLDLVEEILSRVSATSLKRLRSTCKQWNTLFKKRSFSQKHFHIAPKESMVLMLKEYRVCSMNINLNVSPPSVEFQGTLGIKDDSHSNLGQVEIVEVYHCDGLLLCATRDNRLVVWNPCLGETRWIQLKDECRRYSTFALGYENNKFCRRNYKILRYWGWFHDHIPDDGGRFRFEIYDFRSDSWKVLDDVPDDRFPPRDLIILVFRHLEIMVLWLYQLLEKNNSQCYKRLRHQRWRYL.

The 44-residue stretch at 1 to 44 folds into the F-box domain; that stretch reads MSDLPLDLVEEILSRVSATSLKRLRSTCKQWNTLFKKRSFSQKH.

This chain is F-box protein At3g22350, found in Arabidopsis thaliana (Mouse-ear cress).